The primary structure comprises 282 residues: RNA-4 uncharacterized 31.9 kDa protein (282 aa).

In Beta macrocarpa (Beet), this protein is RNA-4 uncharacterized 31.9 kDa protein.